The primary structure comprises 761 residues: RNA-binding protein mde7 (761 aa).

Composition is skewed to polar residues over residues 31 to 46 (PNHS…NSLL), 58 to 83 (SRNS…TTPF), and 99 to 110 (SRNNSYLQGTAE). Disordered regions lie at residues 31–110 (PNHS…GTAE) and 188–213 (HYFD…EASN). Residues 188–197 (HYFDDTDKSV) show a composition bias toward basic and acidic residues. The span at 199–211 (SKSSSGSNSLSEA) shows a compositional bias: low complexity. An RRM 1 domain is found at 223 to 289 (IVGGLPDDFD…SSTNNFTIIQ (67 aa)). The span at 442–466 (ESNSLSNQPNNFAQTSFDYQPNHPN) shows a compositional bias: polar residues. The disordered stretch occupies residues 442–468 (ESNSLSNQPNNFAQTSFDYQPNHPNAI). An RRM 2 domain is found at 602–679 (NTIYVGNLSN…GGIRLSYSKN (78 aa)).

In Schizosaccharomyces pombe (strain 972 / ATCC 24843) (Fission yeast), this protein is RNA-binding protein mde7 (mde7).